The chain runs to 110 residues: Toxin HigB-2 (110 aa).

Its function is as follows. Toxic component of a type II toxin-antitoxin (TA) system. Inhibits translation by cleavage of mRNA. The protein is Toxin HigB-2 (higB-2) of Vibrio cholerae serotype O1 (strain ATCC 39315 / El Tor Inaba N16961).